The sequence spans 101 residues: Small ribosomal subunit protein uS14 (101 aa).

This sequence belongs to the universal ribosomal protein uS14 family. In terms of assembly, part of the 30S ribosomal subunit. Contacts proteins S3 and S10.

Its function is as follows. Binds 16S rRNA, required for the assembly of 30S particles and may also be responsible for determining the conformation of the 16S rRNA at the A site. This Saccharophagus degradans (strain 2-40 / ATCC 43961 / DSM 17024) protein is Small ribosomal subunit protein uS14.